The sequence spans 374 residues: Probable ethanolamine kinase (374 aa).

2 residues coordinate ATP: R93 and D252.

This sequence belongs to the choline/ethanolamine kinase family.

It catalyses the reaction ethanolamine + ATP = phosphoethanolamine + ADP + H(+). The protein operates within phospholipid metabolism; phosphatidylethanolamine biosynthesis; phosphatidylethanolamine from ethanolamine: step 1/3. Involved in phospholipid biosynthesis. Catalyzes the first step in phosphatidylethanolamine biosynthesis. This chain is Probable ethanolamine kinase (EMB1187), found in Arabidopsis thaliana (Mouse-ear cress).